A 961-amino-acid chain; its full sequence is IQ motif and SEC7 domain-containing protein 1 (961 aa).

The segment at 21–113 (SGVEGEAPSS…SLSESYELSS (93 aa)) is disordered. Residues 29–38 (SSETGTSLDS) are compositionally biased toward polar residues. Phosphoserine occurs at positions 88, 104, and 106. The region spanning 133–162 (TRHAARTIQTAFRQYQMNKNFERLRSSMSE) is the IQ domain. Phosphoserine occurs at positions 179, 247, and 251. 3 disordered regions span residues 263–291 (SEEVPASDTARARDTEPKPGLHGMDHRKL), 310–332 (LSPPLPLSQAGDRPSSTESDLRL), and 347–515 (KEDK…DSPA). Over residues 272–291 (ARARDTEPKPGLHGMDHRKL) the composition is skewed to basic and acidic residues. Basic and acidic residues-rich tracts occupy residues 364-374 (ERPEPRLRVEH) and 428-444 (LPREEPELRPRPPRPLE). A compositionally biased stretch (low complexity) spans 469–487 (DSINSTSNSNDTINCSSES). 2 positions are modified to phosphoserine: Ser510 and Ser513. The 194-residue stretch at 515-708 (AFSNDVIRKR…IGIYERIRKR (194 aa)) folds into the SEC7 domain. The 93-residue stretch at 772–864 (HQREIFLFND…LRESVAEVQE (93 aa)) folds into the PH domain. The stretch at 846–877 (QDRKKFTDDLRESVAEVQEMEKHRIESELEKQ) forms a coiled coil. Ser890 is subject to Phosphoserine. Phosphotyrosine is present on Tyr909. The disordered stretch occupies residues 920-961 (LSSSLRDLSEAGKRGRRSSAGSLESNVEFQPFQPPQPPVLCS). A phosphoserine mark is found at Ser922 and Ser923. Over residues 938 to 947 (SAGSLESNVE) the composition is skewed to polar residues. A compositionally biased stretch (pro residues) spans 951 to 961 (FQPPQPPVLCS).

The protein belongs to the BRAG family. Interacts with ARF1 and ARF6. Interacts with GRIA2; the interaction is required for ARF6 activation. As to expression, expressed in hippocampus.

It localises to the cytoplasm. It is found in the nucleus. The protein resides in the postsynaptic density. Its subcellular location is the cytoplasmic vesicle. The protein localises to the secretory vesicle. It localises to the synaptic vesicle. Guanine nucleotide exchange factor for ARF1 and ARF6. Guanine nucleotide exchange factor activity is enhanced by lipid binding. Accelerates GTP binding by ARFs of all three classes. Guanine nucleotide exchange protein for ARF6, mediating internalization of beta-1 integrin. Involved in neuronal development. In neurons, plays a role in the control of vesicle formation by endocytoc cargo. Upon long term depression, interacts with GRIA2 and mediates the activation of ARF6 to internalize synaptic AMPAR receptors. This is IQ motif and SEC7 domain-containing protein 1 (Iqsec1) from Mus musculus (Mouse).